The following is a 618-amino-acid chain: Dihydroxy-acid dehydratase (618 aa).

Asp81 lines the Mg(2+) pocket. [2Fe-2S] cluster is bound at residue Cys122. Asp123 and Lys124 together coordinate Mg(2+). Lys124 carries the N6-carboxylysine modification. Cys195 provides a ligand contact to [2Fe-2S] cluster. Residue Glu491 coordinates Mg(2+). The Proton acceptor role is filled by Ser517.

This sequence belongs to the IlvD/Edd family. Homodimer. The cofactor is [2Fe-2S] cluster. Requires Mg(2+) as cofactor.

It carries out the reaction (2R)-2,3-dihydroxy-3-methylbutanoate = 3-methyl-2-oxobutanoate + H2O. The enzyme catalyses (2R,3R)-2,3-dihydroxy-3-methylpentanoate = (S)-3-methyl-2-oxopentanoate + H2O. It functions in the pathway amino-acid biosynthesis; L-isoleucine biosynthesis; L-isoleucine from 2-oxobutanoate: step 3/4. It participates in amino-acid biosynthesis; L-valine biosynthesis; L-valine from pyruvate: step 3/4. Functions in the biosynthesis of branched-chain amino acids. Catalyzes the dehydration of (2R,3R)-2,3-dihydroxy-3-methylpentanoate (2,3-dihydroxy-3-methylvalerate) into 2-oxo-3-methylpentanoate (2-oxo-3-methylvalerate) and of (2R)-2,3-dihydroxy-3-methylbutanoate (2,3-dihydroxyisovalerate) into 2-oxo-3-methylbutanoate (2-oxoisovalerate), the penultimate precursor to L-isoleucine and L-valine, respectively. The sequence is that of Dihydroxy-acid dehydratase from Dechloromonas aromatica (strain RCB).